A 357-amino-acid chain; its full sequence is Protein RecA (357 aa).

An ATP-binding site is contributed by 78 to 85; sequence GPESSGKT.

This sequence belongs to the RecA family.

It localises to the cytoplasm. Its function is as follows. Can catalyze the hydrolysis of ATP in the presence of single-stranded DNA, the ATP-dependent uptake of single-stranded DNA by duplex DNA, and the ATP-dependent hybridization of homologous single-stranded DNAs. It interacts with LexA causing its activation and leading to its autocatalytic cleavage. This is Protein RecA from Cereibacter sphaeroides (strain ATCC 17029 / ATH 2.4.9) (Rhodobacter sphaeroides).